We begin with the raw amino-acid sequence, 240 residues long: Dihydromonapterin reductase (240 aa).

Tyrosine 152 functions as the Proton acceptor in the catalytic mechanism.

It belongs to the short-chain dehydrogenases/reductases (SDR) family. FolM subfamily.

The catalysed reaction is (6S)-5,6,7,8-tetrahydrofolate + NADP(+) = 7,8-dihydrofolate + NADPH + H(+). It carries out the reaction 7,8-dihydromonapterin + NADPH + H(+) = 5,6,7,8-tetrahydromonapterin + NADP(+). Functionally, catalyzes the reduction of dihydromonapterin to tetrahydromonapterin. Also has lower activity with dihydrofolate. This is Dihydromonapterin reductase (folM) from Escherichia coli O139:H28 (strain E24377A / ETEC).